The chain runs to 331 residues: Tyrosine recombinase XerD (331 aa).

The Core-binding (CB) domain occupies Gly8 to Tyr93. The 205-residue stretch at Ala114–Gln318 folds into the Tyr recombinase domain. Catalysis depends on residues Arg161 and Lys185. Basic and acidic residues predominate over residues Gln214 to Thr228. The tract at residues Gln214 to Ser239 is disordered. Active-site residues include His270, Arg273, and His296. Tyr305 serves as the catalytic O-(3'-phospho-DNA)-tyrosine intermediate.

This sequence belongs to the 'phage' integrase family. XerD subfamily. As to quaternary structure, forms a cyclic heterotetrameric complex composed of two molecules of XerC and two molecules of XerD.

Its subcellular location is the cytoplasm. In terms of biological role, site-specific tyrosine recombinase, which acts by catalyzing the cutting and rejoining of the recombining DNA molecules. The XerC-XerD complex is essential to convert dimers of the bacterial chromosome into monomers to permit their segregation at cell division. It also contributes to the segregational stability of plasmids. This is Tyrosine recombinase XerD from Agrobacterium fabrum (strain C58 / ATCC 33970) (Agrobacterium tumefaciens (strain C58)).